We begin with the raw amino-acid sequence, 175 residues long: Ribosome maturation factor RimM (175 aa).

One can recognise a PRC barrel domain in the interval 93–167 (DDEFYYSDLI…YIIITLPEVI (75 aa)).

The protein belongs to the RimM family. As to quaternary structure, binds ribosomal protein uS19.

The protein localises to the cytoplasm. An accessory protein needed during the final step in the assembly of 30S ribosomal subunit, possibly for assembly of the head region. Essential for efficient processing of 16S rRNA. May be needed both before and after RbfA during the maturation of 16S rRNA. It has affinity for free ribosomal 30S subunits but not for 70S ribosomes. The protein is Ribosome maturation factor RimM of Ehrlichia chaffeensis (strain ATCC CRL-10679 / Arkansas).